The sequence spans 294 residues: tRNA pseudouridine synthase B (294 aa).

Asp-40 functions as the Nucleophile in the catalytic mechanism.

It belongs to the pseudouridine synthase TruB family. Type 1 subfamily.

It catalyses the reaction uridine(55) in tRNA = pseudouridine(55) in tRNA. In terms of biological role, responsible for synthesis of pseudouridine from uracil-55 in the psi GC loop of transfer RNAs. The sequence is that of tRNA pseudouridine synthase B from Synechococcus elongatus (strain ATCC 33912 / PCC 7942 / FACHB-805) (Anacystis nidulans R2).